The primary structure comprises 429 residues: Histidinol dehydrogenase (429 aa).

Positions 130, 191, and 214 each coordinate NAD(+). Substrate-binding residues include S237, Q259, and H262. 2 residues coordinate Zn(2+): Q259 and H262. Residues E327 and H328 each act as proton acceptor in the active site. Positions 328, 361, 415, and 420 each coordinate substrate. A Zn(2+)-binding site is contributed by D361. H420 contacts Zn(2+).

Belongs to the histidinol dehydrogenase family. Zn(2+) is required as a cofactor.

It catalyses the reaction L-histidinol + 2 NAD(+) + H2O = L-histidine + 2 NADH + 3 H(+). Its pathway is amino-acid biosynthesis; L-histidine biosynthesis; L-histidine from 5-phospho-alpha-D-ribose 1-diphosphate: step 9/9. Catalyzes the sequential NAD-dependent oxidations of L-histidinol to L-histidinaldehyde and then to L-histidine. The polypeptide is Histidinol dehydrogenase (Geobacter sulfurreducens (strain ATCC 51573 / DSM 12127 / PCA)).